A 590-amino-acid polypeptide reads, in one-letter code: DELLA protein GAI1 (590 aa).

The segment covering 1–10 (MKREYHHPHH) has biased composition (basic residues). Residues 1-28 (MKREYHHPHHPTCSTSPTGKGKMWDADP) are disordered. The short motif at 35-39 (DELLA) is the DELLA motif element. Residues 153–182 (HIEQPPQQPPAPPLYQRDNKRLKPTTSATA) are disordered. Residues 205 to 575 (VDSQETGIRL…RPLIATSAWQ (371 aa)) form the GRAS domain. Positions 212–266 (IRLVHTLMACAEAVQQENLKLAEALVKQIGFLAVSQAGAMRKVATYFAEGLARRI) are leucine repeat I (LRI). The segment at 284–349 (QMHFYETCPY…GGPPSFRLTG (66 aa)) is VHIID. The VHIID signature appears at 315–319 (VHVID). Residues 363–395 (EVGWKLAQLAETIHVEFEYRGFVANSLADLDAS) form a leucine repeat II (LRII) region. Positions 405 to 496 (VAVNSVFELH…EVYLGQQICN (92 aa)) are PFYRE. Residues 413 to 417 (LHSLL) carry the LXXLL motif motif. Residues 499-575 (ACEGPERVER…RPLIATSAWQ (77 aa)) are SAW.

The protein belongs to the GRAS family. DELLA subfamily. In terms of processing, phosphorylated. Ubiquitinated. Upon GA application it is ubiquitinated, leading to its subsequent degradation.

The protein localises to the nucleus. In terms of biological role, probable transcriptional regulator that acts as a repressor of the gibberellin (GA) signaling pathway. Probably acts by participating in large multiprotein complexes that repress transcription of GA-inducible genes. Upon GA application, it is degraded by the proteasome, allowing the GA signaling pathway. The protein is DELLA protein GAI1 (GAI1) of Vitis vinifera (Grape).